The following is a 93-amino-acid chain: Small ribosomal subunit protein uS19 (93 aa).

The protein belongs to the universal ribosomal protein uS19 family.

Functionally, protein S19 forms a complex with S13 that binds strongly to the 16S ribosomal RNA. This Mycolicibacterium paratuberculosis (strain ATCC BAA-968 / K-10) (Mycobacterium paratuberculosis) protein is Small ribosomal subunit protein uS19.